The sequence spans 345 residues: Methylthioribose-1-phosphate isomerase (345 aa).

Substrate is bound by residues 44-46 (RGA), arginine 86, and glutamine 194. Aspartate 235 serves as the catalytic Proton donor. Residue 245–246 (NK) participates in substrate binding.

Belongs to the eIF-2B alpha/beta/delta subunits family. MtnA subfamily.

The catalysed reaction is 5-(methylsulfanyl)-alpha-D-ribose 1-phosphate = 5-(methylsulfanyl)-D-ribulose 1-phosphate. It functions in the pathway amino-acid biosynthesis; L-methionine biosynthesis via salvage pathway; L-methionine from S-methyl-5-thio-alpha-D-ribose 1-phosphate: step 1/6. Functionally, catalyzes the interconversion of methylthioribose-1-phosphate (MTR-1-P) into methylthioribulose-1-phosphate (MTRu-1-P). The sequence is that of Methylthioribose-1-phosphate isomerase from Desulfitobacterium hafniense (strain Y51).